The following is a 500-amino-acid chain: Probable cytosol aminopeptidase (500 aa).

Lys264 and Asp269 together coordinate Mn(2+). Lys276 is a catalytic residue. Positions 287, 346, and 348 each coordinate Mn(2+). The active site involves Arg350.

It belongs to the peptidase M17 family. Mn(2+) serves as cofactor.

The protein resides in the cytoplasm. The enzyme catalyses Release of an N-terminal amino acid, Xaa-|-Yaa-, in which Xaa is preferably Leu, but may be other amino acids including Pro although not Arg or Lys, and Yaa may be Pro. Amino acid amides and methyl esters are also readily hydrolyzed, but rates on arylamides are exceedingly low.. It carries out the reaction Release of an N-terminal amino acid, preferentially leucine, but not glutamic or aspartic acids.. In terms of biological role, presumably involved in the processing and regular turnover of intracellular proteins. Catalyzes the removal of unsubstituted N-terminal amino acids from various peptides. This chain is Probable cytosol aminopeptidase, found in Afipia carboxidovorans (strain ATCC 49405 / DSM 1227 / KCTC 32145 / OM5) (Oligotropha carboxidovorans).